Reading from the N-terminus, the 204-residue chain is Outer-membrane lipoprotein LolB (204 aa).

Positions 1–20 (MLRSRRLALLCLATPLWLAA) are cleaved as a signal peptide. Cysteine 21 carries the N-palmitoyl cysteine lipid modification. Cysteine 21 carries the S-diacylglycerol cysteine lipid modification. The segment at 131-150 (GRAAPGTPSNVTRDANGRPD) is disordered.

This sequence belongs to the LolB family. Monomer.

It localises to the cell outer membrane. In terms of biological role, plays a critical role in the incorporation of lipoproteins in the outer membrane after they are released by the LolA protein. This Cupriavidus metallidurans (strain ATCC 43123 / DSM 2839 / NBRC 102507 / CH34) (Ralstonia metallidurans) protein is Outer-membrane lipoprotein LolB.